Reading from the N-terminus, the 396-residue chain is 1-deoxy-D-xylulose 5-phosphate reductoisomerase (396 aa).

Residues Thr10, Gly11, Ser12, Ile13, and Asn123 each contribute to the NADPH site. Lys124 serves as a coordination point for 1-deoxy-D-xylulose 5-phosphate. Glu125 is an NADPH binding site. Position 149 (Asp149) interacts with Mn(2+). 1-deoxy-D-xylulose 5-phosphate-binding residues include Ser150, Glu151, Ser185, and His208. Glu151 contacts Mn(2+). Residue Gly214 participates in NADPH binding. The 1-deoxy-D-xylulose 5-phosphate site is built by Ser221, Asn226, Lys227, and Glu230. Glu230 lines the Mn(2+) pocket.

It belongs to the DXR family. It depends on Mg(2+) as a cofactor. Mn(2+) serves as cofactor.

It catalyses the reaction 2-C-methyl-D-erythritol 4-phosphate + NADP(+) = 1-deoxy-D-xylulose 5-phosphate + NADPH + H(+). Its pathway is isoprenoid biosynthesis; isopentenyl diphosphate biosynthesis via DXP pathway; isopentenyl diphosphate from 1-deoxy-D-xylulose 5-phosphate: step 1/6. Catalyzes the NADPH-dependent rearrangement and reduction of 1-deoxy-D-xylulose-5-phosphate (DXP) to 2-C-methyl-D-erythritol 4-phosphate (MEP). The polypeptide is 1-deoxy-D-xylulose 5-phosphate reductoisomerase (Shewanella sp. (strain ANA-3)).